An 82-amino-acid polypeptide reads, in one-letter code: MRVEICIAKEKITKMPNGAVDALKEELTRRISKRYDDVEVIVKATSNDGLSVTRTADKDSAKTFVQETLKDTWESADEWFVR.

The protein belongs to the DinI family.

The polypeptide is DinI-like protein (Enterobacteria phage VT1-Sakai).